Here is a 186-residue protein sequence, read N- to C-terminus: Probable chorismate pyruvate-lyase (186 aa).

Substrate is bound by residues R77, L115, and E174.

This sequence belongs to the UbiC family.

Its subcellular location is the cytoplasm. The enzyme catalyses chorismate = 4-hydroxybenzoate + pyruvate. Its pathway is cofactor biosynthesis; ubiquinone biosynthesis. Removes the pyruvyl group from chorismate, with concomitant aromatization of the ring, to provide 4-hydroxybenzoate (4HB) for the ubiquinone pathway. This is Probable chorismate pyruvate-lyase from Shewanella sp. (strain W3-18-1).